The following is a 420-amino-acid chain: Glyceraldehyde-3-phosphate dehydrogenase GAPCP2, chloroplastic (420 aa).

The transit peptide at 1-66 (MALSSLLRSA…YNAKRVQPIK (66 aa)) directs the protein to the chloroplast. Residues 94–95 (RI), aspartate 116, and arginine 162 contribute to the NAD(+) site. Residues 233 to 235 (SCT), threonine 264, 293 to 294 (TG), and arginine 316 each bind D-glyceraldehyde 3-phosphate. The active-site Nucleophile is the cysteine 234. Asparagine 398 is an NAD(+) binding site.

Belongs to the glyceraldehyde-3-phosphate dehydrogenase family. As to quaternary structure, homotetramer. As to expression, expressed in shoot and root vasculature, leaf veins and vascular tissue of flowers and siliques.

It is found in the plastid. Its subcellular location is the chloroplast stroma. It catalyses the reaction D-glyceraldehyde 3-phosphate + phosphate + NAD(+) = (2R)-3-phospho-glyceroyl phosphate + NADH + H(+). Functionally, involved in plastidial glycolytic pathway and plays a specific role in glycolytic energy production in non-green plastids and chloroplasts. Essential for breakdown of starch to form sucrose for export to non-photosynthetic tissues, and to generate primary metabolites for anabolic pathways such as fatty acid and amino acid synthesis. Plays an important role in plant development by providing substrates for the phosphorylated pathway of serine biosynthesis in roots. Plays a crucial role in pollen development. Functionally redundant with GAPCP1. In Arabidopsis thaliana (Mouse-ear cress), this protein is Glyceraldehyde-3-phosphate dehydrogenase GAPCP2, chloroplastic (GAPCP2).